A 548-amino-acid polypeptide reads, in one-letter code: Probable 2,3-bisphosphoglycerate-independent phosphoglycerate mutase (548 aa).

Mn(2+)-binding residues include aspartate 20 and serine 73. Catalysis depends on serine 73, which acts as the Phosphoserine intermediate. Substrate contacts are provided by residues histidine 134, 164 to 165 (RD), arginine 200, arginine 207, 279 to 282 (RGDR), and lysine 354. Mn(2+)-binding residues include aspartate 422, histidine 426, aspartate 463, histidine 464, and histidine 493.

It belongs to the BPG-independent phosphoglycerate mutase family. As to quaternary structure, monomer. The cofactor is Mn(2+).

The catalysed reaction is (2R)-2-phosphoglycerate = (2R)-3-phosphoglycerate. It functions in the pathway carbohydrate degradation; glycolysis; pyruvate from D-glyceraldehyde 3-phosphate: step 3/5. Catalyzes the interconversion of 2-phosphoglycerate and 3-phosphoglycerate. The sequence is that of Probable 2,3-bisphosphoglycerate-independent phosphoglycerate mutase (gpmI) from Leptospira interrogans serogroup Icterohaemorrhagiae serovar copenhageni (strain Fiocruz L1-130).